The following is a 459-amino-acid chain: DIMBOA UDP-glucosyltransferase BX8 (459 aa).

Residue histidine 19 is the Proton acceptor of the active site. Position 19 (histidine 19) interacts with an anthocyanidin. Aspartate 119 (charge relay) is an active-site residue. UDP-alpha-D-glucose-binding residues include threonine 141, alanine 340, glutamine 342, histidine 357, tryptophan 360, asparagine 361, serine 362, and glutamate 365. Glycine 380 contacts an anthocyanidin. UDP-alpha-D-glucose-binding residues include aspartate 381 and glutamine 382.

Belongs to the UDP-glycosyltransferase family. The cofactor is Mg(2+). It depends on Ca(2+) as a cofactor. In terms of tissue distribution, expressed at the same levels in roots and shoots.

It carries out the reaction DIMBOA + UDP-alpha-D-glucose = DIMBOA beta-D-glucoside + UDP + H(+). The enzyme catalyses DIBOA + UDP-alpha-D-glucose = DIBOA beta-D-glucoside + UDP + H(+). Its function is as follows. Glucosyltransferase involved in the last step of benzoxazinoid glucoside biosynthesis. Catalyzes the glucosylation of hydroxamic acids utilizing UDP-glucose as glucose doner, reducing the toxicity of these natural insecticides for storage. Can use DIMBOA and DIBOA as substrates, HMBOA (2-hydroxy-7-methoxy-2H-1,4-benzoxazin-3(4H)-one) and HBOA (2-hydroxy-2H-1,4-benzoxazin-3(4H)-one) with a lower efficiency, but not indole acetic acid or quercitin. This Zea mays (Maize) protein is DIMBOA UDP-glucosyltransferase BX8 (Bx8).